A 469-amino-acid chain; its full sequence is Glutamate--tRNA ligase (469 aa).

The 'HIGH' region motif lies at 9-19; that stretch reads PSPTGFLHVGG. Zn(2+) is bound by residues Cys98, Cys100, Cys125, and Asp127. Residues 236–240 carry the 'KMSKS' region motif; the sequence is KLSKR. Lys239 is an ATP binding site.

The protein belongs to the class-I aminoacyl-tRNA synthetase family. Glutamate--tRNA ligase type 1 subfamily. Monomer. It depends on Zn(2+) as a cofactor.

The protein resides in the cytoplasm. The catalysed reaction is tRNA(Glu) + L-glutamate + ATP = L-glutamyl-tRNA(Glu) + AMP + diphosphate. Catalyzes the attachment of glutamate to tRNA(Glu) in a two-step reaction: glutamate is first activated by ATP to form Glu-AMP and then transferred to the acceptor end of tRNA(Glu). This Shewanella sediminis (strain HAW-EB3) protein is Glutamate--tRNA ligase.